Consider the following 260-residue polypeptide: HLA class II histocompatibility antigen, DP alpha 1 chain (260 aa).

The first 28 residues, 1-28, serve as a signal peptide directing secretion; that stretch reads MRPEDRMFHIRAVILRALSLAFLLSLRG. The segment at 29–115 is alpha-1; it reads AGAIKADHVS…QRSNHTQATN (87 aa). Residues 29 to 222 lie on the Extracellular side of the membrane; it reads AGAIKADHVS…EPIQMPETTE (194 aa). N-linked (GlcNAc...) asparagine glycosylation is found at Asn-109 and Asn-149. An alpha-2 region spans residues 116–209; it reads DPPEVTVFPK…GLDQPLLKHW (94 aa). Residues 118-210 enclose the Ig-like C1-type domain; the sequence is PEVTVFPKEP…LDQPLLKHWE (93 aa). Cys-138 and Cys-194 form a disulfide bridge. Residues 210 to 222 form a connecting peptide region; sequence EAQEPIQMPETTE. The helical transmembrane segment at 223 to 245 threads the bilayer; sequence TVLCALGLVLGLVGIIVGTVLII. The Cytoplasmic segment spans residues 246–260; sequence KSLRSGHDPRAQGTL.

This sequence belongs to the MHC class II family. In terms of assembly, heterodimer of an alpha and a beta subunit; also referred as MHC class II molecule. In the endoplasmic reticulum (ER) it forms a heterononamer; 3 MHC class II molecules bind to a CD74 homotrimer (also known as invariant chain or HLA class II histocompatibility antigen gamma chain). In the endosomal/lysosomal system; CD74 undergoes sequential degradation by various proteases; leaving a small fragment termed CLIP on each MHC class II molecule. MHC class II molecule interacts with HLA_DM, and HLA_DO in B-cells, in order to release CLIP and facilitate the binding of antigenic peptides.

It localises to the cell membrane. The protein localises to the endoplasmic reticulum membrane. Its subcellular location is the golgi apparatus. It is found in the trans-Golgi network membrane. The protein resides in the endosome membrane. It localises to the lysosome membrane. In terms of biological role, binds peptides derived from antigens that access the endocytic route of antigen presenting cells (APC) and presents them on the cell surface for recognition by the CD4 T-cells. The peptide binding cleft accommodates peptides of 10-30 residues. The peptides presented by MHC class II molecules are generated mostly by degradation of proteins that access the endocytic route, where they are processed by lysosomal proteases and other hydrolases. Exogenous antigens that have been endocytosed by the APC are thus readily available for presentation via MHC II molecules, and for this reason this antigen presentation pathway is usually referred to as exogenous. As membrane proteins on their way to degradation in lysosomes as part of their normal turn-over are also contained in the endosomal/lysosomal compartments, exogenous antigens must compete with those derived from endogenous components. Autophagy is also a source of endogenous peptides, autophagosomes constitutively fuse with MHC class II loading compartments. In addition to APCs, other cells of the gastrointestinal tract, such as epithelial cells, express MHC class II molecules and CD74 and act as APCs, which is an unusual trait of the GI tract. To produce a MHC class II molecule that presents an antigen, three MHC class II molecules (heterodimers of an alpha and a beta chain) associate with a CD74 trimer in the ER to form a heterononamer. Soon after the entry of this complex into the endosomal/lysosomal system where antigen processing occurs, CD74 undergoes a sequential degradation by various proteases, including CTSS and CTSL, leaving a small fragment termed CLIP (class-II-associated invariant chain peptide). The removal of CLIP is facilitated by HLA-DM via direct binding to the alpha-beta-CLIP complex so that CLIP is released. HLA-DM stabilizes MHC class II molecules until primary high affinity antigenic peptides are bound. The MHC II molecule bound to a peptide is then transported to the cell membrane surface. In B-cells, the interaction between HLA-DM and MHC class II molecules is regulated by HLA-DO. Primary dendritic cells (DCs) also to express HLA-DO. Lysosomal microenvironment has been implicated in the regulation of antigen loading into MHC II molecules, increased acidification produces increased proteolysis and efficient peptide loading. This chain is HLA class II histocompatibility antigen, DP alpha 1 chain (HLA-DPA1), found in Homo sapiens (Human).